The sequence spans 271 residues: 5-deoxy-glucuronate isomerase (271 aa).

Belongs to the isomerase IolB family.

The catalysed reaction is 5-deoxy-D-glucuronate = 5-dehydro-2-deoxy-D-gluconate. It functions in the pathway polyol metabolism; myo-inositol degradation into acetyl-CoA; acetyl-CoA from myo-inositol: step 4/7. Involved in the isomerization of 5-deoxy-glucuronate (5DG) to 5-dehydro-2-deoxy-D-gluconate (DKG or 2-deoxy-5-keto-D-gluconate). The polypeptide is 5-deoxy-glucuronate isomerase (Shouchella clausii (strain KSM-K16) (Alkalihalobacillus clausii)).